We begin with the raw amino-acid sequence, 398 residues long: Enoyl-[acyl-carrier-protein] reductase [NADH] (398 aa).

NAD(+) contacts are provided by residues 48-53, 74-75, 111-112, and 139-140; these read GASTGY, FE, DA, and LA. Y225 contributes to the substrate binding site. Y235 acts as the Proton donor in catalysis. Residues K244 and 273-275 each bind NAD(+); that span reads VVT.

Belongs to the TER reductase family. In terms of assembly, monomer.

The enzyme catalyses a 2,3-saturated acyl-[ACP] + NAD(+) = a (2E)-enoyl-[ACP] + NADH + H(+). Its pathway is lipid metabolism; fatty acid biosynthesis. In terms of biological role, involved in the final reduction of the elongation cycle of fatty acid synthesis (FAS II). Catalyzes the reduction of a carbon-carbon double bond in an enoyl moiety that is covalently linked to an acyl carrier protein (ACP). The sequence is that of Enoyl-[acyl-carrier-protein] reductase [NADH] from Pseudomonas fluorescens (strain ATCC BAA-477 / NRRL B-23932 / Pf-5).